We begin with the raw amino-acid sequence, 143 residues long: Large ribosomal subunit protein uL11 (143 aa).

It belongs to the universal ribosomal protein uL11 family. In terms of assembly, part of the ribosomal stalk of the 50S ribosomal subunit. Interacts with L10 and the large rRNA to form the base of the stalk. L10 forms an elongated spine to which L12 dimers bind in a sequential fashion forming a multimeric L10(L12)X complex. One or more lysine residues are methylated.

Functionally, forms part of the ribosomal stalk which helps the ribosome interact with GTP-bound translation factors. The chain is Large ribosomal subunit protein uL11 from Treponema denticola (strain ATCC 35405 / DSM 14222 / CIP 103919 / JCM 8153 / KCTC 15104).